Consider the following 461-residue polypeptide: Photosystem II CP43 reaction center protein (461 aa).

A propeptide spanning residues 1 to 2 is cleaved from the precursor; sequence ME. Thr3 carries the post-translational modification N-acetylthreonine. Thr3 carries the phosphothreonine modification. 5 consecutive transmembrane segments (helical) span residues 57–81, 122–143, 166–188, 243–263, and 279–300; these read LFEVAHFVPEKPMYEQGLILLPHLA, LLGPETLEESFPFFGYVWKDRN, KASYFGGIYDTWAPGGGDVRKIT, KPFAWARRALVWSGEAYLSYS, and WFNNTAYPSEFYGPTGPEASQA. Glu355 provides a ligand contact to [CaMn4O5] cluster. Residues 435-459 traverse the membrane as a helical segment; that stretch reads RARAAAAGFEKGIDRDFEPVLSMTP.

The protein belongs to the PsbB/PsbC family. PsbC subfamily. In terms of assembly, PSII is composed of 1 copy each of membrane proteins PsbA, PsbB, PsbC, PsbD, PsbE, PsbF, PsbH, PsbI, PsbJ, PsbK, PsbL, PsbM, PsbT, PsbX, PsbY, PsbZ, Psb30/Ycf12, at least 3 peripheral proteins of the oxygen-evolving complex and a large number of cofactors. It forms dimeric complexes. It depends on Binds multiple chlorophylls and provides some of the ligands for the Ca-4Mn-5O cluster of the oxygen-evolving complex. It may also provide a ligand for a Cl- that is required for oxygen evolution. PSII binds additional chlorophylls, carotenoids and specific lipids. as a cofactor.

The protein localises to the plastid. The protein resides in the chloroplast thylakoid membrane. One of the components of the core complex of photosystem II (PSII). It binds chlorophyll and helps catalyze the primary light-induced photochemical processes of PSII. PSII is a light-driven water:plastoquinone oxidoreductase, using light energy to abstract electrons from H(2)O, generating O(2) and a proton gradient subsequently used for ATP formation. The polypeptide is Photosystem II CP43 reaction center protein (Lotus japonicus (Lotus corniculatus var. japonicus)).